We begin with the raw amino-acid sequence, 348 residues long: MNGTEGPNFYVPFSNATGVVRSPFEYPQYYLAEPWQFSMLAAYMFMLIVLGFPINFLTLYVTVQHKKLRTPLNYILLNLAVADLFMVFGGFTTTLYTSLHGYFVFGPTGCNLEGFFATLGGEIALWSLVVLAIERYVVVCKPMSNFRFGENHAIMGLVFTWIMALACAAPPLVGWSRYIPEGMQCSCGIDYYTLKPEVNNESFVIYMFVVHFFIPLFVIFFCYGQLVFTVKEAAAQQQESATTQKAEKEVTRMVIIMVIAFLICWLPYAGVAFYIFTHQGSNFGPIFMTLPAFFAKTASIYNPVIYIMMNKQFRTCMITTLCCGKNPLGDDEASTTASKTETSQVAPA.

N-acetylmethionine is present on Met-1. Residues 1–36 (MNGTEGPNFYVPFSNATGVVRSPFEYPQYYLAEPWQ) lie on the Extracellular side of the membrane. N-linked (GlcNAc...) asparagine glycosylation is found at Asn-2 and Asn-15. A helical membrane pass occupies residues 37-61 (FSMLAAYMFMLIVLGFPINFLTLYV). At 62-73 (TVQHKKLRTPLN) the chain is on the cytoplasmic side. A helical transmembrane segment spans residues 74-96 (YILLNLAVADLFMVFGGFTTTLY). The Extracellular portion of the chain corresponds to 97–110 (TSLHGYFVFGPTGC). Cysteines 110 and 187 form a disulfide. A helical membrane pass occupies residues 111-133 (NLEGFFATLGGEIALWSLVVLAI). A 'Ionic lock' involved in activated form stabilization motif is present at residues 134-136 (ERY). The Cytoplasmic portion of the chain corresponds to 134 to 152 (ERYVVVCKPMSNFRFGENH). The chain crosses the membrane as a helical span at residues 153-173 (AIMGLVFTWIMALACAAPPLV). The Extracellular segment spans residues 174 to 202 (GWSRYIPEGMQCSCGIDYYTLKPEVNNES). Glu-201 contacts Zn(2+). Residues 203–224 (FVIYMFVVHFFIPLFVIFFCYG) traverse the membrane as a helical segment. At 225-252 (QLVFTVKEAAAQQQESATTQKAEKEVTR) the chain is on the cytoplasmic side. A helical membrane pass occupies residues 253–274 (MVIIMVIAFLICWLPYAGVAFY). Residues 275–286 (IFTHQGSNFGPI) lie on the Extracellular side of the membrane. Zn(2+) is bound at residue Gln-279. The helical transmembrane segment at 287–308 (FMTLPAFFAKTASIYNPVIYIM) threads the bilayer. Lys-296 is subject to N6-(retinylidene)lysine. At 309-348 (MNKQFRTCMITTLCCGKNPLGDDEASTTASKTETSQVAPA) the chain is on the cytoplasmic side. 2 S-palmitoyl cysteine lipidation sites follow: Cys-322 and Cys-323. Residues 330-348 (DDEASTTASKTETSQVAPA) form an interaction with SAG region. At Ser-334 the chain carries Phosphoserine. Phosphothreonine occurs at positions 335 and 336. Ser-338 is modified (phosphoserine). Phosphothreonine occurs at positions 340 and 342. Ser-343 is subject to Phosphoserine.

Belongs to the G-protein coupled receptor 1 family. Opsin subfamily. In terms of assembly, homodimer. May form a complex composed of RHO, GRK1 and RCVRN in a Ca(2+)-dependent manner; RCVRN prevents the interaction between GRK1 and RHO. Interacts with GRK1. Interacts (phosphorylated form) with SAG. Interacts with GNAT1. Interacts with GNAT3. SAG and G-proteins compete for a common binding site. Interacts with PRCD; the interaction promotes PRCD stability. Forms a complex with ASAP1 and ARF4. Forms a complex with ASAP1, RAB11A, Rabin8/RAB3IP, ARF4 and RAB11FIP3; the complex regulates Golgi-to-cilia rhodopsin/RHO transport in photoreceptors. In terms of processing, phosphorylated on some or all of the serine and threonine residues present in the C-terminal region. Post-translationally, contains one covalently linked retinal chromophore. Upon light absorption, the covalently bound 11-cis-retinal is converted to all-trans-retinal. After hydrolysis of the Schiff base and release of the covalently bound all-trans-retinal, active rhodopsin is regenerated by binding of a fresh molecule of 11-cis-retinal.

The protein resides in the membrane. Its subcellular location is the cell projection. The protein localises to the cilium. It localises to the photoreceptor outer segment. Photoreceptor required for image-forming vision at low light intensity. Required for photoreceptor cell viability after birth. Light-induced isomerization of 11-cis to all-trans retinal triggers a conformational change that activates signaling via G-proteins. Subsequent receptor phosphorylation mediates displacement of the bound G-protein alpha subunit by the arrestin SAG and terminates signaling. The protein is Rhodopsin (RHO) of Otolemur crassicaudatus (Brown greater galago).